The chain runs to 446 residues: Exodeoxyribonuclease 7 large subunit (446 aa).

It belongs to the XseA family. As to quaternary structure, heterooligomer composed of large and small subunits.

The protein resides in the cytoplasm. It catalyses the reaction Exonucleolytic cleavage in either 5'- to 3'- or 3'- to 5'-direction to yield nucleoside 5'-phosphates.. Its function is as follows. Bidirectionally degrades single-stranded DNA into large acid-insoluble oligonucleotides, which are then degraded further into small acid-soluble oligonucleotides. The polypeptide is Exodeoxyribonuclease 7 large subunit (Xanthomonas campestris pv. campestris (strain B100)).